The primary structure comprises 218 residues: Ribulose-phosphate 3-epimerase (218 aa).

Ser10 is a binding site for substrate. The a divalent metal cation site is built by His35, Asp37, and His68. Asp37 (proton acceptor) is an active-site residue. Substrate-binding positions include His68, 144–147 (GFSG), 177–179 (DGG), and 199–200 (GS). An a divalent metal cation-binding site is contributed by Asp177. The active-site Proton donor is the Asp177.

Belongs to the ribulose-phosphate 3-epimerase family. A divalent metal cation is required as a cofactor.

The catalysed reaction is D-ribulose 5-phosphate = D-xylulose 5-phosphate. The protein operates within carbohydrate degradation. Functionally, catalyzes the reversible epimerization of D-ribulose 5-phosphate to D-xylulose 5-phosphate. The polypeptide is Ribulose-phosphate 3-epimerase (Treponema pallidum (strain Nichols)).